The sequence spans 122 residues: Large ribosomal subunit protein uL14c (122 aa).

This sequence belongs to the universal ribosomal protein uL14 family. As to quaternary structure, part of the 50S ribosomal subunit.

Its subcellular location is the plastid. The protein localises to the chloroplast. Its function is as follows. Binds to 23S rRNA. The chain is Large ribosomal subunit protein uL14c from Jasminum nudiflorum (Winter jasmine).